We begin with the raw amino-acid sequence, 213 residues long: 3-isopropylmalate dehydratase small subunit (213 aa).

It belongs to the LeuD family. LeuD type 1 subfamily. As to quaternary structure, heterodimer of LeuC and LeuD.

The enzyme catalyses (2R,3S)-3-isopropylmalate = (2S)-2-isopropylmalate. It participates in amino-acid biosynthesis; L-leucine biosynthesis; L-leucine from 3-methyl-2-oxobutanoate: step 2/4. Functionally, catalyzes the isomerization between 2-isopropylmalate and 3-isopropylmalate, via the formation of 2-isopropylmaleate. The polypeptide is 3-isopropylmalate dehydratase small subunit (Pseudomonas syringae pv. syringae (strain B728a)).